The primary structure comprises 28 residues: uncharacterized protein (28 aa).

Its subcellular location is the cell inner membrane. This is an uncharacterized protein from Escherichia coli (strain K12).